The sequence spans 369 residues: Phospho-N-acetylmuramoyl-pentapeptide-transferase (369 aa).

10 helical membrane-spanning segments follow: residues 13–33, 49–69, 95–115, 119–139, 154–174, 183–203, 215–235, 237–257, 281–301, and 346–366; these read ISGI…ALTL, LPLL…VPLL, MGGI…SNFA, LAVS…DWQI, LALQ…NQPA, WVSF…FVLV, IDGL…AIVA, TSPA…GFLA, AVAL…IFFV, and VVSS…AIAS.

This sequence belongs to the glycosyltransferase 4 family. MraY subfamily. The cofactor is Mg(2+).

It localises to the cell inner membrane. It catalyses the reaction UDP-N-acetyl-alpha-D-muramoyl-L-alanyl-gamma-D-glutamyl-meso-2,6-diaminopimeloyl-D-alanyl-D-alanine + di-trans,octa-cis-undecaprenyl phosphate = di-trans,octa-cis-undecaprenyl diphospho-N-acetyl-alpha-D-muramoyl-L-alanyl-D-glutamyl-meso-2,6-diaminopimeloyl-D-alanyl-D-alanine + UMP. It participates in cell wall biogenesis; peptidoglycan biosynthesis. Its function is as follows. Catalyzes the initial step of the lipid cycle reactions in the biosynthesis of the cell wall peptidoglycan: transfers peptidoglycan precursor phospho-MurNAc-pentapeptide from UDP-MurNAc-pentapeptide onto the lipid carrier undecaprenyl phosphate, yielding undecaprenyl-pyrophosphoryl-MurNAc-pentapeptide, known as lipid I. The sequence is that of Phospho-N-acetylmuramoyl-pentapeptide-transferase from Nostoc sp. (strain PCC 7120 / SAG 25.82 / UTEX 2576).